A 144-amino-acid chain; its full sequence is Protection of telomeres protein 1c (144 aa).

This sequence belongs to the telombin family. In terms of tissue distribution, expressed at extremely low levels at the limit of detection.

The protein resides in the nucleus. Its subcellular location is the chromosome. It localises to the telomere. Functionally, binds specifically single-stranded telomeric DNA with weak affinity. Has probably no function in the regulation of telomere length. The sequence is that of Protection of telomeres protein 1c from Arabidopsis thaliana (Mouse-ear cress).